Here is a 274-residue protein sequence, read N- to C-terminus: Large ribosomal subunit protein uL2 (274 aa).

Residues 224-274 (VMNPVDHPHGGGEGRSPIGRNPVTPWGKPALGARTRKKKPGDRLIVKRRAR) are disordered. A compositionally biased stretch (basic residues) spans 257–274 (RTRKKKPGDRLIVKRRAR).

This sequence belongs to the universal ribosomal protein uL2 family. In terms of assembly, part of the 50S ribosomal subunit. Forms a bridge to the 30S subunit in the 70S ribosome.

Functionally, one of the primary rRNA binding proteins. Required for association of the 30S and 50S subunits to form the 70S ribosome, for tRNA binding and peptide bond formation. It has been suggested to have peptidyltransferase activity; this is somewhat controversial. Makes several contacts with the 16S rRNA in the 70S ribosome. The protein is Large ribosomal subunit protein uL2 of Pelotomaculum thermopropionicum (strain DSM 13744 / JCM 10971 / SI).